We begin with the raw amino-acid sequence, 147 residues long: Lysozyme C (147 aa).

A signal peptide spans 1–18 (MRSLLILVLCFLPLAALG). Positions 19–147 (KVYGRCELAA…VHAWIRGCRL (129 aa)) constitute a C-type lysozyme domain. 4 cysteine pairs are disulfide-bonded: Cys-24/Cys-145, Cys-48/Cys-133, Cys-82/Cys-98, and Cys-94/Cys-112.

The protein belongs to the glycosyl hydrolase 22 family. In terms of assembly, monomer.

It localises to the secreted. The catalysed reaction is Hydrolysis of (1-&gt;4)-beta-linkages between N-acetylmuramic acid and N-acetyl-D-glucosamine residues in a peptidoglycan and between N-acetyl-D-glucosamine residues in chitodextrins.. Lysozymes have primarily a bacteriolytic function; those in tissues and body fluids are associated with the monocyte-macrophage system and enhance the activity of immunoagents. This is Lysozyme C (LYZ) from Meleagris gallopavo (Wild turkey).